A 405-amino-acid chain; its full sequence is Acetate kinase (405 aa).

Mg(2+) is bound at residue N7. K14 is an ATP binding site. R92 serves as a coordination point for substrate. The active-site Proton donor/acceptor is the D149. Residues 209-213 and 284-286 contribute to the ATP site; these read HLGNG and DMR. E389 serves as a coordination point for Mg(2+).

It belongs to the acetokinase family. Homodimer. Requires Mg(2+) as cofactor. Mn(2+) is required as a cofactor.

The protein resides in the cytoplasm. The catalysed reaction is acetate + ATP = acetyl phosphate + ADP. The protein operates within metabolic intermediate biosynthesis; acetyl-CoA biosynthesis; acetyl-CoA from acetate: step 1/2. Its function is as follows. Catalyzes the formation of acetyl phosphate from acetate and ATP. Can also catalyze the reverse reaction. The chain is Acetate kinase from Borrelia garinii subsp. bavariensis (strain ATCC BAA-2496 / DSM 23469 / PBi) (Borreliella bavariensis).